A 26-amino-acid chain; its full sequence is Halocyntin (26 aa).

Functionally, has strong antibacterial activity against the Gram-positive bacteria M.luteus, S.aureus, B.megaterium, A.viridans and E.faecalis, and against the Gram-negative bacterium K.pneumoniae. Has less potent antibacterial activity against the Gram-negative bacteria E.coli DH5alpha, S.typhimurium, P.aeruginosa, E.aerogenes and N.gonorrhoeae. Has moderate hemolytic activity against sheep erythrocytes. The polypeptide is Halocyntin (Halocynthia papillosa (Red sea-squirt)).